Here is a 189-residue protein sequence, read N- to C-terminus: uncharacterized protein (189 aa).

4 helical membrane-spanning segments follow: residues I35–K55, G97–F117, W123–T143, and G144–I164.

The protein localises to the cell membrane. This is an uncharacterized protein from Bacillus subtilis (strain 168).